The primary structure comprises 354 residues: Uroporphyrinogen decarboxylase (354 aa).

Substrate is bound by residues 28–32 (RQAGR), aspartate 78, tyrosine 155, serine 210, and histidine 325.

Belongs to the uroporphyrinogen decarboxylase family. As to quaternary structure, homodimer.

It is found in the cytoplasm. The catalysed reaction is uroporphyrinogen III + 4 H(+) = coproporphyrinogen III + 4 CO2. The protein operates within porphyrin-containing compound metabolism; protoporphyrin-IX biosynthesis; coproporphyrinogen-III from 5-aminolevulinate: step 4/4. Its function is as follows. Catalyzes the decarboxylation of four acetate groups of uroporphyrinogen-III to yield coproporphyrinogen-III. The chain is Uroporphyrinogen decarboxylase from Trichodesmium erythraeum (strain IMS101).